Consider the following 245-residue polypeptide: tRNA1(Val) (adenine(37)-N6)-methyltransferase (245 aa).

Belongs to the methyltransferase superfamily. tRNA (adenine-N(6)-)-methyltransferase family.

It is found in the cytoplasm. The enzyme catalyses adenosine(37) in tRNA1(Val) + S-adenosyl-L-methionine = N(6)-methyladenosine(37) in tRNA1(Val) + S-adenosyl-L-homocysteine + H(+). Functionally, specifically methylates the adenine in position 37 of tRNA(1)(Val) (anticodon cmo5UAC). This Klebsiella pneumoniae (strain 342) protein is tRNA1(Val) (adenine(37)-N6)-methyltransferase.